Here is a 215-residue protein sequence, read N- to C-terminus: Cytochrome b6 (215 aa).

A helical membrane pass occupies residues 32–52 (IFYCLGGITFTCFLVQVATGF). Position 35 (Cys35) interacts with heme c. Heme b is bound by residues His86 and His100. 3 helical membrane-spanning segments follow: residues 90 to 110 (ASMM…TGGF), 116 to 136 (STWI…VTGY), and 186 to 206 (LHTF…FLMI). 2 residues coordinate heme b: His187 and His202.

It belongs to the cytochrome b family. PetB subfamily. As to quaternary structure, the 4 large subunits of the cytochrome b6-f complex are cytochrome b6, subunit IV (17 kDa polypeptide, PetD), cytochrome f and the Rieske protein, while the 4 small subunits are PetG, PetL, PetM and PetN. The complex functions as a dimer. Heme b serves as cofactor. The cofactor is heme c.

The protein localises to the plastid. It localises to the chloroplast thylakoid membrane. Component of the cytochrome b6-f complex, which mediates electron transfer between photosystem II (PSII) and photosystem I (PSI), cyclic electron flow around PSI, and state transitions. The protein is Cytochrome b6 of Tetradesmus obliquus (Green alga).